We begin with the raw amino-acid sequence, 239 residues long: Purine nucleoside phosphorylase DeoD-type (239 aa).

His-5 is an a purine D-ribonucleoside binding site. The phosphate site is built by Gly-21 and Arg-25. Residue Lys-27 is modified to N6-acetyllysine. Residues Arg-44 and 88–91 (RVGS) contribute to the phosphate site. A purine D-ribonucleoside-binding positions include 180-182 (EME) and 204-205 (SD). The active-site Proton donor is the Asp-205.

This sequence belongs to the PNP/UDP phosphorylase family. In terms of assembly, homohexamer; trimer of homodimers.

It catalyses the reaction a purine D-ribonucleoside + phosphate = a purine nucleobase + alpha-D-ribose 1-phosphate. The catalysed reaction is a purine 2'-deoxy-D-ribonucleoside + phosphate = a purine nucleobase + 2-deoxy-alpha-D-ribose 1-phosphate. Catalyzes the reversible phosphorolytic breakdown of the N-glycosidic bond in the beta-(deoxy)ribonucleoside molecules, with the formation of the corresponding free purine bases and pentose-1-phosphate. The chain is Purine nucleoside phosphorylase DeoD-type from Escherichia coli O81 (strain ED1a).